The following is a 236-amino-acid chain: Coat protein (236 aa).

Residues 1–27 are disordered; the sequence is MTTPANTTQAVGSTTSTTTTTAGATPA. Over residues 7–27 the composition is skewed to low complexity; the sequence is TTQAVGSTTSTTTTTAGATPA.

Belongs to the potexvirus capsid protein family.

It localises to the virion. Required for genome encapsidation. Forms ribonucleoprotein complexes along with TGB1 helicase and viral RNA. This is Coat protein from Brassica campestris (Field mustard).